We begin with the raw amino-acid sequence, 806 residues long: Leucine--tRNA ligase (806 aa).

Positions 54-64 match the 'HIGH' region motif; it reads SYPSGDLHMGH. The 'KMSKS' region signature appears at 571-575; it reads KMSKS. Position 574 (Lys-574) interacts with ATP.

Belongs to the class-I aminoacyl-tRNA synthetase family.

It localises to the cytoplasm. The enzyme catalyses tRNA(Leu) + L-leucine + ATP = L-leucyl-tRNA(Leu) + AMP + diphosphate. The chain is Leucine--tRNA ligase from Tropheryma whipplei (strain TW08/27) (Whipple's bacillus).